Here is a 696-residue protein sequence, read N- to C-terminus: Polyribonucleotide nucleotidyltransferase (696 aa).

Positions 483 and 489 each coordinate Mg(2+). The region spanning 550–609 (PRITTIWVKVDKIRDVIGSGGKNIRSVTEATGVSIDIDDTGKINIASTNKEACDLAIKMI) is the KH domain. In terms of domain architecture, S1 motif spans 619–687 (GKLYMGTVKK…KQGKIKLSRK (69 aa)).

Belongs to the polyribonucleotide nucleotidyltransferase family. Requires Mg(2+) as cofactor.

It is found in the cytoplasm. It catalyses the reaction RNA(n+1) + phosphate = RNA(n) + a ribonucleoside 5'-diphosphate. Its function is as follows. Involved in mRNA degradation. Catalyzes the phosphorolysis of single-stranded polyribonucleotides processively in the 3'- to 5'-direction. In Citrifermentans bemidjiense (strain ATCC BAA-1014 / DSM 16622 / JCM 12645 / Bem) (Geobacter bemidjiensis), this protein is Polyribonucleotide nucleotidyltransferase.